We begin with the raw amino-acid sequence, 457 residues long: Endo-1,3(4)-beta-glucanase ARB_04519 (457 aa).

The signal sequence occupies residues 1–18; it reads MRTTGLLLLGALAELGSA. The region spanning 19–319 is the GH16 domain; that stretch reads TYILEDDYQP…YMKVYQQGTA (301 aa). Glu130 functions as the Nucleophile in the catalytic mechanism. The active-site Proton donor is the Glu135. Asn200 carries N-linked (GlcNAc...) asparagine glycosylation. The segment at 318–397 is disordered; that stretch reads TAPTKPSQAP…DSCPPPTQPA (80 aa). A compositionally biased stretch (low complexity) spans 333 to 352; sequence TPALPTMKSTSTVSSMVSAT. Residues 353–362 show a composition bias toward polar residues; that stretch reads QPAPTASNPT. A compositionally biased stretch (low complexity) spans 368–378; sequence PSSSSSNNGPQ.

It belongs to the glycosyl hydrolase 16 family.

The protein localises to the secreted. The catalysed reaction is Endohydrolysis of (1-&gt;3)- or (1-&gt;4)-linkages in beta-D-glucans when the glucose residue whose reducing group is involved in the linkage to be hydrolyzed is itself substituted at C-3.. Functionally, mixed-linked glucanase involved in the degradation of complex natural cellulosic substrates. Active on laminarin. lichenan, soluble carboxymethyl cellulose but not on pustulan. This chain is Endo-1,3(4)-beta-glucanase ARB_04519, found in Arthroderma benhamiae (strain ATCC MYA-4681 / CBS 112371) (Trichophyton mentagrophytes).